A 205-amino-acid chain; its full sequence is MNLFKPRILVLFAATALISGIAIVAQTSVADSGDKITATSSLKTPIVNRAITESEVLAAQKAWGEALVAISTTYDAKGKASAKALAEKVIDDAYGYQFGPVLFKPTLAISPRTFRTTRAGALAYFVGDDKAFPEDKGFALSSWRKVEIKNAAIFITGNTATTMGNVIITDKQGKATTVDKTWQFLKDDHGKLRIITHHSSLPYEQ.

An N-terminal signal peptide occupies residues 1-24 (MNLFKPRILVLFAATALISGIAIV). 2 residues coordinate hydrogencarbonate: Thr106 and Tyr124.

The protein belongs to the iota-class carbonic anhydrase family. In terms of assembly, homotetramer; dimer of dimers. Does not require a metal cofactor. is required as a cofactor.

It catalyses the reaction hydrogencarbonate + H(+) = CO2 + H2O. Its activity is regulated as follows. Activity is not affected by EDTA or 2,6-pyridinedicarboxylic acid (PDA). Activity is not affected by addition of most divalent metal ions, except zinc ions which decrease the activity. Inhibited by the iodide ion. Its function is as follows. Catalyzes the hydration of carbon dioxide (CO2) to bicarbonate (HCO3(-)). Has only very low bicarbonate dehydration activity. May function even in metal-poor environments. The chain is Metal-independent carbonic anhydrase from Nostoc sp. (strain PCC 7120 / SAG 25.82 / UTEX 2576).